Here is a 419-residue protein sequence, read N- to C-terminus: DNA ligase (419 aa).

Residues 1-120 (MLNHFPGHCS…ARQKRGAHTN (120 aa)) form an NTD region. Residues 121 to 317 (TGMIPPMLVK…NYHSAHLAKL (197 aa)) are AD domain. Lys-151 serves as the catalytic N6-AMP-lysine intermediate. The segment at 318 to 419 (KPLLDAEFIL…REPINVLEII (102 aa)) is OB domain.

It belongs to the ATP-dependent DNA ligase family.

Its subcellular location is the virion. The catalysed reaction is ATP + (deoxyribonucleotide)n-3'-hydroxyl + 5'-phospho-(deoxyribonucleotide)m = (deoxyribonucleotide)n+m + AMP + diphosphate.. Functionally, very low-fidelity DNA ligase that seals nicks in double-stranded DNA during DNA repair. Together with the viral repair DNA polymerase X, fills the single nucleotide gaps generated by the AP endonuclease. It is not essential for viral replication and recombination. Displays a very low adenylation activity towards DNA with 3'-dideoxy- or 3'-amino-terminated nicks compared to regular nick DNA. The protein is DNA ligase of Ornithodoros (relapsing fever ticks).